Consider the following 331-residue polypeptide: Beta-ketoacyl-[acyl-carrier-protein] synthase III (331 aa).

Catalysis depends on residues Cys-115 and His-255. An ACP-binding region spans residues 256–260; sequence QANFR. Residue Asn-285 is part of the active site.

The protein belongs to the thiolase-like superfamily. FabH family. As to quaternary structure, homodimer.

It localises to the cytoplasm. The enzyme catalyses malonyl-[ACP] + acetyl-CoA + H(+) = 3-oxobutanoyl-[ACP] + CO2 + CoA. The protein operates within lipid metabolism; fatty acid biosynthesis. Functionally, catalyzes the condensation reaction of fatty acid synthesis by the addition to an acyl acceptor of two carbons from malonyl-ACP. Catalyzes the first condensation reaction which initiates fatty acid synthesis and may therefore play a role in governing the total rate of fatty acid production. Possesses both acetoacetyl-ACP synthase and acetyl transacylase activities. Its substrate specificity determines the biosynthesis of branched-chain and/or straight-chain of fatty acids. The polypeptide is Beta-ketoacyl-[acyl-carrier-protein] synthase III (Helicobacter pylori (strain J99 / ATCC 700824) (Campylobacter pylori J99)).